The primary structure comprises 300 residues: MIQEGKLEQQFFDYLHSERNYSVNTSTAYENDLLDFRRFLNEQAITTYQQVTFLDVRIYLTELKQKSFSRTTVARKISSLRSFYTFLLRENVINENPFTYVSHAKNQLRLPKFFYSEEMEALFQVVYEDNETLTLRDRVLLEVLYGTGIRVSECAGILLPDLDTSYQAILIRGKGNKERYVPFGVYAEDAITDYLPERANLMSRYKKSHDALLVNHYGDPLTTRGIRYCLSKIISKASLTRKIHPHMLRHTFATDLLNNGADMRTVQELLGHASLSSTQIYTHVTKEHLKSTYMKHHPRA.

Residues 2–88 form the Core-binding (CB) domain; that stretch reads IQEGKLEQQF…SLRSFYTFLL (87 aa). The 186-residue stretch at 109–294 folds into the Tyr recombinase domain; the sequence is RLPKFFYSEE…TKEHLKSTYM (186 aa). Residues Arg150, Lys174, His246, Arg249, and His272 contribute to the active site. Catalysis depends on Tyr281, which acts as the O-(3'-phospho-DNA)-tyrosine intermediate.

It belongs to the 'phage' integrase family. XerC subfamily. In terms of assembly, forms a cyclic heterotetrameric complex composed of two molecules of XerC and two molecules of XerD.

The protein resides in the cytoplasm. Site-specific tyrosine recombinase, which acts by catalyzing the cutting and rejoining of the recombining DNA molecules. The XerC-XerD complex is essential to convert dimers of the bacterial chromosome into monomers to permit their segregation at cell division. It also contributes to the segregational stability of plasmids. The polypeptide is Tyrosine recombinase XerC (Listeria monocytogenes serotype 4b (strain F2365)).